The chain runs to 172 residues: Small ribosomal subunit protein uS5 (172 aa).

The S5 DRBM domain maps to 17–80 (LREKMISVNR…EQARRNMFKV (64 aa)).

This sequence belongs to the universal ribosomal protein uS5 family. As to quaternary structure, part of the 30S ribosomal subunit. Contacts proteins S4 and S8.

Its function is as follows. With S4 and S12 plays an important role in translational accuracy. Functionally, located at the back of the 30S subunit body where it stabilizes the conformation of the head with respect to the body. In Burkholderia orbicola (strain AU 1054), this protein is Small ribosomal subunit protein uS5.